Consider the following 690-residue polypeptide: MNLRSVFTVEQQRILQRYYENGMTNQSKNCFQLILQCAQETKLDFSVVRTWVGNKRRKMSSKNSESGTATTGTSLSAPDITVRNVVNIARPSSQQSSWTSANNDVIVTGIYSPASSSSRQGTNKHTDTQITEAHKIPIQKTATKNDTEFQLHIPVQRQVAHCKNASLLLGEKTIILSRQTSVLNAGNSVFNHAKKNYGNSSVQASEMTVPQKPSVCHRPCKIEPVGIQRSYKPEHTGPALHNLCGQKPTIRDPYCRTQNLEIREVFSLAVSDYPQRILGGNAPQKPSSAEGNCLSIAMETGDAEDEYAREEELASMRAQIPSYSRFYESGSSLRAENQSTTLPGPGRNMPNSQMVNIRDMSDNVLYQNRNYHLTPRTSLHTASSTMYSNTNPLRSNFSPHFASSNQLRLSQNQNNYQISGNLTVPWITGCSRKRALQDRTQFSDRDLATLKKYWDNGMTSLGSVCREKIEAVATELNVDCEIVRTWIGNRRRKYRLMGIEVPPPRGGPADFSEQPESGSLSALTPGEEAGPEVGEDNDRNDEVSICLSEGSSQEEPNEVVPNDARAHKEEDHHAVTTDNVKIEIIDDEESDMISNSEVEQVNSFLDYKNEEVKFIENELEIQKQKYFKLQTFVRSLILAMKADDKEQQQALLSDLPPELEEMDFNHASLEPDDTSFSVSSLSEKNVSESL.

Positions 3–63 form a DNA-binding region, homeobox 1; the sequence is LRSVFTVEQQ…NKRRKMSSKN (61 aa). Disordered regions lie at residues 55–76 and 112–132; these read KRRK…TSLS and SPAS…QITE. Low complexity predominate over residues 64 to 76; the sequence is SESGTATTGTSLS. Polar residues predominate over residues 113-123; the sequence is PASSSSRQGTN. Glycyl lysine isopeptide (Lys-Gly) (interchain with G-Cter in SUMO2) cross-links involve residues Lys135, Lys140, Lys144, Lys163, Lys172, Lys194, Lys212, Lys221, and Lys232. The segment at residues 435–498 is a DNA-binding region (homeobox 2); that stretch reads ALQDRTQFSD…NRRRKYRLMG (64 aa). The interval 501-539 is disordered; the sequence is VPPPRGGPADFSEQPESGSLSALTPGEEAGPEVGEDNDR. A Glycyl lysine isopeptide (Lys-Gly) (interchain with G-Cter in SUMO2) cross-link involves residue Lys613. A disordered region spans residues 664 to 690; that stretch reads FNHASLEPDDTSFSVSSLSEKNVSESL. Residues 674–690 are compositionally biased toward polar residues; that stretch reads TSFSVSSLSEKNVSESL.

It is found in the nucleus. This is Highly divergent homeobox (HDX) from Homo sapiens (Human).